A 70-amino-acid polypeptide reads, in one-letter code: Large ribosomal subunit protein uL29 (70 aa).

The protein belongs to the universal ribosomal protein uL29 family.

This Symbiobacterium thermophilum (strain DSM 24528 / JCM 14929 / IAM 14863 / T) protein is Large ribosomal subunit protein uL29.